The chain runs to 101 residues: Small ribosomal subunit protein uS14 (101 aa).

It belongs to the universal ribosomal protein uS14 family. In terms of assembly, part of the 30S ribosomal subunit. Contacts proteins S3 and S10.

In terms of biological role, binds 16S rRNA, required for the assembly of 30S particles and may also be responsible for determining the conformation of the 16S rRNA at the A site. In Pseudomonas syringae pv. tomato (strain ATCC BAA-871 / DC3000), this protein is Small ribosomal subunit protein uS14.